Consider the following 477-residue polypeptide: Probable cytosolic Fe-S cluster assembly factor GK14772 (477 aa).

8 residues coordinate [4Fe-4S] cluster: C23, C69, C72, C75, C188, C244, C396, and C400.

This sequence belongs to the NARF family.

Component of the cytosolic iron-sulfur (Fe/S) protein assembly machinery. Required for maturation of extramitochondrial Fe/S proteins. This is Probable cytosolic Fe-S cluster assembly factor GK14772 from Drosophila willistoni (Fruit fly).